The primary structure comprises 93 residues: Regulatory protein RepI (93 aa).

In terms of biological role, this protein is involved in regulating the plasmid copy-number. Increasing the level of this protein results in a higher plasmid copy-number. In Escherichia coli, this protein is Regulatory protein RepI (repI).